We begin with the raw amino-acid sequence, 426 residues long: Enolase (426 aa).

Gln165 contacts (2R)-2-phosphoglycerate. The Proton donor role is filled by Glu207. Residues Asp244, Glu285, and Asp312 each coordinate Mg(2+). Positions 337, 366, 367, and 388 each coordinate (2R)-2-phosphoglycerate. The active-site Proton acceptor is Lys337.

It belongs to the enolase family. Requires Mg(2+) as cofactor.

Its subcellular location is the cytoplasm. It localises to the secreted. The protein localises to the cell surface. It carries out the reaction (2R)-2-phosphoglycerate = phosphoenolpyruvate + H2O. It participates in carbohydrate degradation; glycolysis; pyruvate from D-glyceraldehyde 3-phosphate: step 4/5. Functionally, catalyzes the reversible conversion of 2-phosphoglycerate (2-PG) into phosphoenolpyruvate (PEP). It is essential for the degradation of carbohydrates via glycolysis. The polypeptide is Enolase (Thermosynechococcus vestitus (strain NIES-2133 / IAM M-273 / BP-1)).